The primary structure comprises 273 residues: MAIRKYKPTSPGRRYQTCSTFEEVTTDQPQKSLLGTIKKTGGRNNFGRITSRHVGGGHKRRYRFIDFKREKLDVPGKIASIEYDPNRSARIALVSYEDGEKRYIIAPAKVAVGEKIVSGERADIKAGNAMPLRNIPVGSLIHNIELKVGKGGQLIRSAGTYGQLMAKEGSYAQVRLPSGEMRKIFIDCRATIGQVGNNEHENISVGKAGRTRWAGKRPKVRGVVMNPVDHPMGGGEGRSSGGRHPCTPWGVPTKGHKTRSNKSTDKYIVKRRG.

The interval 223–273 is disordered; the sequence is VVMNPVDHPMGGGEGRSSGGRHPCTPWGVPTKGHKTRSNKSTDKYIVKRRG. Residues 262–273 are compositionally biased toward basic and acidic residues; that stretch reads KSTDKYIVKRRG.

Belongs to the universal ribosomal protein uL2 family. Part of the 50S ribosomal subunit. Forms a bridge to the 30S subunit in the 70S ribosome.

Functionally, one of the primary rRNA binding proteins. Required for association of the 30S and 50S subunits to form the 70S ribosome, for tRNA binding and peptide bond formation. It has been suggested to have peptidyltransferase activity; this is somewhat controversial. Makes several contacts with the 16S rRNA in the 70S ribosome. The protein is Large ribosomal subunit protein uL2 of Syntrophus aciditrophicus (strain SB).